A 480-amino-acid chain; its full sequence is MFIGIAYLGGDRQMDELPDHLVWDILSKLHTTDDRNSLSLSCKRFFSLDNEQRYSLRIGCGLVPASDALLSLCRRFPNLSKVEIIYSGWMSKLGKQVDDQGLLVLTTNCHSLTDLTLSFCTFITDVGIGHLSSCPELSSLKLNFAPRITGCGVLSLAVGCKKLRRLHLIRCLNVASVEWLEYFGKLETLEELCIKNCRAIGEGDLIKLRNSWRKLTSLQFEVDANYRYMKVYDQLDVERWPKQLVPCDSLVELSLGNCIIAPGRGLACVLRNCKNLEKLHLDMCTGVSDSDIIALVQKASHLRSISLRVPSDFTLPLLNNITLRLTDESLSAIAQHCSKLESFKISFSDGEFPSLFSFTLQGIITLIQKCPVRELSLDHVCVFNDMGMEALCSAQKLEILELVHCQEVSDEGLILVSQFPSLNVLKLSKCLGVTDDGMRPLVGSHKLELLVVEDCPQVSRRGVHGAATSVSFKQDLSWMY.

The F-box domain occupies 11 to 58; sequence DRQMDELPDHLVWDILSKLHTTDDRNSLSLSCKRFFSLDNEQRYSLRI. 15 LRR repeats span residues 61–86, 94–119, 120–144, 145–170, 171–196, 197–222, 229–257, 258–283, 284–309, 322–347, 355–379, 380–404, 405–429, 430–454, and 455–480; these read GLVPASDALLSLCRRFPNLSKVEIIY, GKQVDDQGLLVLTTNCHSLTDLTLSF, CTFITDVGIGHLSSCPELSSLKLNF, APRITGCGVLSLAVGCKKLRRLHLIR, CLNVASVEWLEYFGKLETLEELCIKN, CRAIGEGDLIKLRNSWRKLTSLQFEV, MKVYDQLDVERWPKQLVPCDSLVELSLGN, CIIAPGRGLACVLRNCKNLEKLHLDM, CTGVSDSDIIALVQKASHLRSISLRV, TLRLTDESLSAIAQHCSKLESFKISF, LFSFTLQGIITLIQKCPVRELSLDH, VCVFNDMGMEALCSAQKLEILELVH, CQEVSDEGLILVSQFPSLNVLKLSK, CLGVTDDGMRPLVGSHKLELLVVED, and CPQVSRRGVHGAATSVSFKQDLSWMY.

This Arabidopsis thaliana (Mouse-ear cress) protein is F-box/LRR-repeat protein 14 (FBL14).